Consider the following 419-residue polypeptide: S-adenosylmethionine synthase (419 aa).

Residue histidine 15 coordinates ATP. Aspartate 17 is a binding site for Mg(2+). Glutamate 43 is a K(+) binding site. Positions 56 and 100 each coordinate L-methionine. The interval 100–110 (QSPDIAQGVNE) is flexible loop. Residues 171-173 (DGK), 248-249 (KF), aspartate 257, 263-264 (RK), alanine 280, and lysine 284 each bind ATP. Aspartate 257 contacts L-methionine. Lysine 288 contacts L-methionine.

The protein belongs to the AdoMet synthase family. As to quaternary structure, homotetramer; dimer of dimers. The cofactor is Mg(2+). K(+) serves as cofactor.

The protein localises to the cytoplasm. It carries out the reaction L-methionine + ATP + H2O = S-adenosyl-L-methionine + phosphate + diphosphate. Its pathway is amino-acid biosynthesis; S-adenosyl-L-methionine biosynthesis; S-adenosyl-L-methionine from L-methionine: step 1/1. Functionally, catalyzes the formation of S-adenosylmethionine (AdoMet) from methionine and ATP. The overall synthetic reaction is composed of two sequential steps, AdoMet formation and the subsequent tripolyphosphate hydrolysis which occurs prior to release of AdoMet from the enzyme. This Prochlorococcus marinus (strain MIT 9313) protein is S-adenosylmethionine synthase.